The sequence spans 695 residues: Potassium voltage-gated channel subfamily KQT member 4 (695 aa).

A disordered region spans residues methionine 1–alanine 21. At methionine 1 to glycine 96 the chain is on the cytoplasmic side. Arginine 93 provides a ligand contact to a 1,2-diacyl-sn-glycero-3-phospho-(1D-myo-inositol-4,5-bisphosphate). A helical membrane pass occupies residues tryptophan 97–leucine 118. Residues serine 119–asparagine 129 lie on the Extracellular side of the membrane. A helical membrane pass occupies residues glutamate 130–tryptophan 152. Residues serine 153–arginine 168 lie on the Cytoplasmic side of the membrane. Residues phenylalanine 169–alanine 191 traverse the membrane as a helical segment. Lysine 172 serves as a coordination point for a 1,2-diacyl-sn-glycero-3-phospho-(1D-myo-inositol-4,5-bisphosphate). The Extracellular segment spans residues glycine 192–alanine 202. The helical; Voltage-sensor transmembrane segment at leucine 203–threonine 223 threads the bilayer. The a 1,2-diacyl-sn-glycero-3-phospho-(1D-myo-inositol-4,5-bisphosphate) site is built by arginine 219, arginine 220, lysine 225, and serine 235. Residues tryptophan 224 to serine 235 lie on the Cytoplasmic side of the membrane. A helical membrane pass occupies residues lysine 236–leucine 258. At alanine 259–tyrosine 270 the chain is on the extracellular side. An intramembrane region (pore-forming) is located at residues alanine 271–histidine 292. Position 293 (threonine 293) is a topological domain, extracellular. A helical membrane pass occupies residues tryptophan 294 to phenylalanine 322. The Cytoplasmic portion of the chain corresponds to alanine 323–aspartate 695. A 1,2-diacyl-sn-glycero-3-phospho-(1D-myo-inositol-4,5-bisphosphate) contacts are provided by histidine 330 and lysine 333. The segment at alanine 342 to arginine 351 is interaction with CALM. Disordered stretches follow at residues arginine 400–glutamine 480 and arginine 496–lysine 515. Polar residues-rich tracts occupy residues glycine 443–serine 452 and threonine 463–glutamine 480. The segment at arginine 535–phenylalanine 549 is interaction with CALM. The interval lysine 546–alanine 650 is C-terminal assembly domain (tetramerization). The disordered stretch occupies residues valine 587–aspartate 606. The segment covering proline 591 to serine 605 has biased composition (basic and acidic residues). A coiled-coil region spans residues methionine 615–leucine 636.

It belongs to the potassium channel family. KQT (TC 1.A.1.15) subfamily. Kv7.4/KCNQ4 sub-subfamily. Homotetramer. Interacts (via C-terminus) with calmodulin; forms a heterooctameric structure (with 4:4 KCNQ1:CALM stoichiometry); the interaction is calcium-independent, constitutive, participates in the proper assembly of a functional channel. The interaction with calcium-free CALM controls channel trafficking whereas interaction with calcium-bound CALM regulates channel gating. May form a functional heteromultimeric channel with KCNQ3. Interacts with HSP90AB1; promotes cell surface expression of KCNQ4. In terms of tissue distribution, expressed in the outer, but not the inner, sensory hair cells of the cochlea. Slightly expressed in heart, brain and skeletal muscle.

It localises to the basal cell membrane. It carries out the reaction K(+)(in) = K(+)(out). Two molecules of phosphatidylinositol-4,5-bisphosphate (PIP2-I and PIP2-II) are essential to activate KCNQ4 channel by inducing the coupling of the voltage-sensing domain (VSD) and the pore-forming domain (PD). Upon channel activation, PIP2-I and PIP2-II disrupt the VSD-calmodulin/CALM interaction, causing the release of CALM from the VSD which triggers the opening of the gate. Calcium suppresses KCNQ4 channel current through calcium-bound CALM C-terminus. Therefore CALM acts as calcium sensor that controls channel activity. ML213 potentiates KCNQ4 channel. KCNQ4 channel is blocked by linopirdin, XE991 and bepridil, whereas clofilium is without significant effect. Muscarinic agonist oxotremorine-M strongly suppress KCNQ4 current in CHO cells in which cloned KCNQ4 channels were coexpressed with M1 muscarinic receptors. Pore-forming subunit of the voltage-gated potassium (Kv) channel involved in the regulation of sensory cells excitability in the cochlea. KCNQ4/Kv7.4 channel is composed of 4 pore-forming subunits assembled as tetramers. Promotes the outflow of potassium ions in the repolarization phase of action potential which plays a role in regulating membrane potential of excitable cells. The channel conducts a slowly activating and deactivating current. Current often shows some inward rectification at positive potentials. Channel may be selectively permeable in vitro to other cations besides potassium, in decreasing order of affinity K(+) = Rb(+) &gt; Cs(+) &gt; Na(+). Important for normal physiological function of inner ear such as sensory perception of sound. This chain is Potassium voltage-gated channel subfamily KQT member 4, found in Homo sapiens (Human).